The following is a 331-amino-acid chain: GTP 3',8-cyclase (331 aa).

The Radical SAM core domain occupies 6–234; it reads PFNRKIDYLR…PATGKSHDGP (229 aa). Arg-15 is a GTP binding site. [4Fe-4S] cluster is bound by residues Cys-22 and Cys-26. Tyr-28 is a binding site for S-adenosyl-L-methionine. Residue Cys-29 coordinates [4Fe-4S] cluster. Arg-66 contacts GTP. An S-adenosyl-L-methionine-binding site is contributed by Gly-70. Ser-97 is a binding site for GTP. Ser-121 contacts S-adenosyl-L-methionine. GTP is bound at residue Lys-158. Met-192 is a binding site for S-adenosyl-L-methionine. The [4Fe-4S] cluster site is built by Cys-258 and Cys-261. 263–265 contacts GTP; it reads RVR. Cys-275 contributes to the [4Fe-4S] cluster binding site.

Belongs to the radical SAM superfamily. MoaA family. As to quaternary structure, monomer and homodimer. It depends on [4Fe-4S] cluster as a cofactor.

The catalysed reaction is GTP + AH2 + S-adenosyl-L-methionine = (8S)-3',8-cyclo-7,8-dihydroguanosine 5'-triphosphate + 5'-deoxyadenosine + L-methionine + A + H(+). It functions in the pathway cofactor biosynthesis; molybdopterin biosynthesis. Its function is as follows. Catalyzes the cyclization of GTP to (8S)-3',8-cyclo-7,8-dihydroguanosine 5'-triphosphate. This Hydrogenovibrio crunogenus (strain DSM 25203 / XCL-2) (Thiomicrospira crunogena) protein is GTP 3',8-cyclase.